A 100-amino-acid chain; its full sequence is Large ribosomal subunit protein uL23 (100 aa).

The protein belongs to the universal ribosomal protein uL23 family. As to quaternary structure, part of the 50S ribosomal subunit. Contacts protein L29, and trigger factor when it is bound to the ribosome.

One of the early assembly proteins it binds 23S rRNA. One of the proteins that surrounds the polypeptide exit tunnel on the outside of the ribosome. Forms the main docking site for trigger factor binding to the ribosome. This Photobacterium profundum (strain SS9) protein is Large ribosomal subunit protein uL23.